The primary structure comprises 357 residues: MSAFEKPQIIAHIQKGFNYTVFDCKWVPCSAKFVTMGNFARGTGVIQLYEIQHGDLKLLREIEKAKPIKCGTFGATSLQQRYLATGDFGGNLHIWNLEAPEMPVYSVKGHKEIINAIDGIGGLGIGEGAPEIVTGSRDGTVKVWDPRQKDDPVANMEPVQGENKRDCWTVAFGNAYNQEERVVCAGYDNGDIKLFDLRNMALRWETNIKNGVCSLEFDRKDISMNKLVATSLEGKFHVFDMRTQHPTKGFASVSEKAHKSTVWQVRHLPQNRELFLTAGGAGGLHLWKYEYPIQRSKKDSEGIEMGVAGSVSLLQNVTLSTQPISSLDWSPDKRGLCVCSSFDQTVRVLIVTKLNKI.

WD repeat units follow at residues 63–105 (EKAK…MPVY), 115–154 (NAID…DPVA), 162–205 (ENKR…LRWE), 207–249 (NIKN…PTKG), 257–297 (AHKS…QRSK), and 319–357 (LSTQ…LNKI).

Component of the PAQosome complex which is responsible for the biogenesis of several protein complexes and which consists of R2TP complex members RUVBL1, RUVBL2, RPAP3 and PIH1D1, URI complex members PFDN2, PFDN6, PDRG1, UXT and URI1 as well as ASDURF, POLR2E and DNAAF10/WDR92. Interacts with PIH1D1; the interaction associates DNAAF10 with the R2TP complex. Interacts with several dynein axonemal assembly factors. In terms of tissue distribution, widely expressed with the highest expression in testis.

The protein resides in the dynein axonemal particle. Key assembly factor specifically required for the stability of axonemal dynein heavy chains in cytoplasm. The polypeptide is Dynein axonemal assembly factor 10 (Homo sapiens (Human)).